The primary structure comprises 122 residues: Large ribosomal subunit protein uL14 (122 aa).

Belongs to the universal ribosomal protein uL14 family. Part of the 50S ribosomal subunit. Forms a cluster with proteins L3 and L19. In the 70S ribosome, L14 and L19 interact and together make contacts with the 16S rRNA in bridges B5 and B8.

Functionally, binds to 23S rRNA. Forms part of two intersubunit bridges in the 70S ribosome. The polypeptide is Large ribosomal subunit protein uL14 (Flavobacterium johnsoniae (strain ATCC 17061 / DSM 2064 / JCM 8514 / BCRC 14874 / CCUG 350202 / NBRC 14942 / NCIMB 11054 / UW101) (Cytophaga johnsonae)).